Reading from the N-terminus, the 463-residue chain is L-seryl-tRNA(Sec) selenium transferase (463 aa).

K295 bears the N6-(pyridoxal phosphate)lysine mark.

This sequence belongs to the SelA family. In terms of assembly, homodecamer; pentamer of dimers. Binds only one seryl-tRNA(Sec) per dimer. The cofactor is pyridoxal 5'-phosphate.

The protein localises to the cytoplasm. It carries out the reaction L-seryl-tRNA(Sec) + selenophosphate + H(+) = L-selenocysteinyl-tRNA(Sec) + phosphate. The protein operates within aminoacyl-tRNA biosynthesis; selenocysteinyl-tRNA(Sec) biosynthesis; selenocysteinyl-tRNA(Sec) from L-seryl-tRNA(Sec) (bacterial route): step 1/1. Functionally, converts seryl-tRNA(Sec) to selenocysteinyl-tRNA(Sec) required for selenoprotein biosynthesis. This Escherichia coli O127:H6 (strain E2348/69 / EPEC) protein is L-seryl-tRNA(Sec) selenium transferase.